A 45-amino-acid chain; its full sequence is Large ribosomal subunit protein bL34 (45 aa).

This sequence belongs to the bacterial ribosomal protein bL34 family.

This Arthrobacter sp. (strain FB24) protein is Large ribosomal subunit protein bL34.